The following is a 500-amino-acid chain: Na(+)/H(+) antiporter NhaB (500 aa).

The next 12 membrane-spanning stretches (helical) occupy residues 34–54 (PLFF…EFIF), 62–82 (CYPL…GMTT), 90–110 (LVHN…IYFM), 129–149 (ALLG…LDAL), 150–170 (TVTA…HRVA), 205–225 (LLMH…VGEP), 241–261 (FFSK…VTCV), 311–331 (ILIV…LLVI), 350–370 (FKDA…VAVI), 394–414 (MLFI…VATI), 449–469 (VATP…IAPL), and 477–497 (MVWM…YAVS).

This sequence belongs to the NhaB Na(+)/H(+) (TC 2.A.34) antiporter family.

It localises to the cell inner membrane. The enzyme catalyses 2 Na(+)(in) + 3 H(+)(out) = 2 Na(+)(out) + 3 H(+)(in). In terms of biological role, na(+)/H(+) antiporter that extrudes sodium in exchange for external protons. The protein is Na(+)/H(+) antiporter NhaB of Pseudomonas fluorescens (strain ATCC BAA-477 / NRRL B-23932 / Pf-5).